Here is a 104-residue protein sequence, read N- to C-terminus: Large ribosomal subunit protein uL24 (104 aa).

Belongs to the universal ribosomal protein uL24 family. As to quaternary structure, part of the 50S ribosomal subunit.

One of two assembly initiator proteins, it binds directly to the 5'-end of the 23S rRNA, where it nucleates assembly of the 50S subunit. In terms of biological role, one of the proteins that surrounds the polypeptide exit tunnel on the outside of the subunit. The protein is Large ribosomal subunit protein uL24 of Bartonella tribocorum (strain CIP 105476 / IBS 506).